Here is a 258-residue protein sequence, read N- to C-terminus: Ribose-5-phosphate isomerase (258 aa).

It belongs to the ribose 5-phosphate isomerase family.

Its subcellular location is the cytoplasm. It catalyses the reaction aldehydo-D-ribose 5-phosphate = D-ribulose 5-phosphate. The protein operates within carbohydrate degradation; pentose phosphate pathway; D-ribose 5-phosphate from D-ribulose 5-phosphate (non-oxidative stage): step 1/1. This is Ribose-5-phosphate isomerase (RKI1) from Saccharomyces cerevisiae (strain YJM789) (Baker's yeast).